The following is a 556-amino-acid chain: Urocanate hydratase (556 aa).

Residues 52–53, Gln-130, 176–178, Glu-196, Arg-201, 242–243, 263–267, 273–274, and Tyr-322 each bind NAD(+); these read GG, GMG, NA, QTSAH, and YL. Residue Cys-410 is part of the active site. Gly-492 lines the NAD(+) pocket.

It belongs to the urocanase family. NAD(+) is required as a cofactor.

The protein resides in the cytoplasm. It carries out the reaction 4-imidazolone-5-propanoate = trans-urocanate + H2O. It participates in amino-acid degradation; L-histidine degradation into L-glutamate; N-formimidoyl-L-glutamate from L-histidine: step 2/3. Functionally, catalyzes the conversion of urocanate to 4-imidazolone-5-propionate. The chain is Urocanate hydratase from Bradyrhizobium diazoefficiens (strain JCM 10833 / BCRC 13528 / IAM 13628 / NBRC 14792 / USDA 110).